A 208-amino-acid chain; its full sequence is FMN-dependent NADH:quinone oxidoreductase 2 (208 aa).

The protein belongs to the azoreductase type 1 family. In terms of assembly, homodimer. The cofactor is FMN.

The catalysed reaction is 2 a quinone + NADH + H(+) = 2 a 1,4-benzosemiquinone + NAD(+). It carries out the reaction N,N-dimethyl-1,4-phenylenediamine + anthranilate + 2 NAD(+) = 2-(4-dimethylaminophenyl)diazenylbenzoate + 2 NADH + 2 H(+). Functionally, quinone reductase that provides resistance to thiol-specific stress caused by electrophilic quinones. In terms of biological role, also exhibits azoreductase activity. Catalyzes the reductive cleavage of the azo bond in aromatic azo compounds to the corresponding amines. The polypeptide is FMN-dependent NADH:quinone oxidoreductase 2 (Bacillus anthracis).